Here is a 156-residue protein sequence, read N- to C-terminus: Large ribosomal subunit protein uL15 (156 aa).

The span at 1 to 13 (MKLNEIKDNEGAT) shows a compositional bias: basic and acidic residues. Residues 1-39 (MKLNEIKDNEGATKNRKRLGRGIGSGSGKTAGRGVKGQK) form a disordered region. Positions 21–35 (RGIGSGSGKTAGRGV) are enriched in gly residues.

Belongs to the universal ribosomal protein uL15 family. In terms of assembly, part of the 50S ribosomal subunit.

Binds to the 23S rRNA. This is Large ribosomal subunit protein uL15 from Rhizobium meliloti (strain 1021) (Ensifer meliloti).